Reading from the N-terminus, the 330-residue chain is Pantothenate synthetase 2 (330 aa).

Residue His-55 is the Proton donor of the active site. ATP contacts are provided by residues 167-170, Val-196, and 204-207; these read GEKD and ASSR.

The protein belongs to the pantothenate synthetase family. As to quaternary structure, homodimer.

The protein localises to the cytoplasm. It catalyses the reaction (R)-pantoate + beta-alanine + ATP = (R)-pantothenate + AMP + diphosphate + H(+). It functions in the pathway cofactor biosynthesis; (R)-pantothenate biosynthesis; (R)-pantothenate from (R)-pantoate and beta-alanine: step 1/1. Its function is as follows. Catalyzes the condensation of pantoate with beta-alanine in an ATP-dependent reaction via a pantoyl-adenylate intermediate. The chain is Pantothenate synthetase 2 from Frankia alni (strain DSM 45986 / CECT 9034 / ACN14a).